The primary structure comprises 268 residues: Protein c-ets-1-B (268 aa).

A helix HI-1 region spans residues 131–139 (FKDYVRDRA). A helix HI-2 region spans residues 150–157 (AAALAGYT). The ETS DNA-binding region spans 162–242 (IQLWQFLLEL…AGKRYVYRFV (81 aa)). The interval 245–249 (LQSLL) is helix H4. Positions 253–259 (PEELHAM) are helix H5.

The protein belongs to the ETS family. Binds DNA as a homodimer; homodimerization is required for transcription activation.

The protein localises to the nucleus. Its subcellular location is the cytoplasm. Autoinhibited by a module composed of four alpha helices (HI-1, HI-2, H4, and H5) that flank the DNA-binding ETS domain, reducing the affinity for DNA. Functionally, transcription factor. Directly controls the expression of cytokine and chemokine genes in a wide variety of different cellular contexts. The chain is Protein c-ets-1-B (ets1-b) from Xenopus laevis (African clawed frog).